Here is a 186-residue protein sequence, read N- to C-terminus: Alkyl hydroperoxide reductase AhpD (186 aa).

The Proton donor role is filled by Cys-132. A disulfide bridge links Cys-132 with Cys-135. Cys-135 functions as the Cysteine sulfenic acid (-SOH) intermediate in the catalytic mechanism.

The protein belongs to the AhpD family.

The enzyme catalyses N(6)-[(R)-dihydrolipoyl]-L-lysyl-[lipoyl-carrier protein] + a hydroperoxide = N(6)-[(R)-lipoyl]-L-lysyl-[lipoyl-carrier protein] + an alcohol + H2O. Its function is as follows. Antioxidant protein with alkyl hydroperoxidase activity. Required for the reduction of the AhpC active site cysteine residues and for the regeneration of the AhpC enzyme activity. In Anaeromyxobacter dehalogenans (strain 2CP-C), this protein is Alkyl hydroperoxide reductase AhpD.